Here is a 398-residue protein sequence, read N- to C-terminus: 2,3,4,5-tetrahydropyridine-2,6-dicarboxylate N-succinyltransferase (398 aa).

The active-site Acyl-anhydride intermediate is Glu-268. Succinyl-CoA contacts are provided by residues Arg-270, Gly-285, Ser-288, Ala-311, 326–327, Gly-334, Lys-361, and 374–377; these read DG and RQNS.

The protein belongs to the type 2 tetrahydrodipicolinate N-succinyltransferase family. Homotrimer.

The protein localises to the cytoplasm. It carries out the reaction (S)-2,3,4,5-tetrahydrodipicolinate + succinyl-CoA + H2O = (S)-2-succinylamino-6-oxoheptanedioate + CoA. Its pathway is amino-acid biosynthesis; L-lysine biosynthesis via DAP pathway; LL-2,6-diaminopimelate from (S)-tetrahydrodipicolinate (succinylase route): step 1/3. Functionally, catalyzes the conversion of the cyclic tetrahydrodipicolinate (THDP) into the acyclic N-succinyl-L-2-amino-6-oxopimelate using succinyl-CoA. The protein is 2,3,4,5-tetrahydropyridine-2,6-dicarboxylate N-succinyltransferase of Sulfurimonas denitrificans (strain ATCC 33889 / DSM 1251) (Thiomicrospira denitrificans (strain ATCC 33889 / DSM 1251)).